We begin with the raw amino-acid sequence, 283 residues long: MTVQTSKNPQVDIAEDNAFFPSEYSLSQYTSPVSDLDGVDYPKPYRGKHKILVIAADERYLPTDNGKLFSTGNHPIETLLPLYHLHAAGFEFEVATISGLMTKFEYWAMPHKDEKVMPFFEQHKSLFRNPKKLADVVASLNADSEYAAIFVPGGHGALIGLPESQDVAAALQWAIKNDRFVISLCHGPAAFLALRHSDNPLNGYSICAFPDAADKQTPDIGYMPGHLTWYFGEELKKMGMNIINDDITGRVHKDRKLLTGDSPFAANALGKLAAQEMLAAYAS.

Residues His86, Glu91, and His123 each contribute to the Zn(2+) site. The active-site Nucleophile is Cys185.

It belongs to the peptidase C56 family. HchA subfamily. In terms of assembly, homodimer.

It localises to the cytoplasm. The enzyme catalyses N(omega)-(1-hydroxy-2-oxopropyl)-L-arginyl-[protein] + H2O = lactate + L-arginyl-[protein] + H(+). It catalyses the reaction N(6)-(1-hydroxy-2-oxopropyl)-L-lysyl-[protein] + H2O = lactate + L-lysyl-[protein] + H(+). The catalysed reaction is S-(1-hydroxy-2-oxopropyl)-L-cysteinyl-[protein] + H2O = lactate + L-cysteinyl-[protein] + H(+). It carries out the reaction N(omega)-(1-hydroxy-2-oxoethyl)-L-arginyl-[protein] + H2O = L-arginyl-[protein] + glycolate + H(+). The enzyme catalyses N(6)-(1-hydroxy-2-oxoethyl)-L-lysyl-[protein] + H2O = glycolate + L-lysyl-[protein] + H(+). It catalyses the reaction S-(1-hydroxy-2-oxoethyl)-L-cysteinyl-[protein] + H2O = glycolate + L-cysteinyl-[protein] + H(+). The catalysed reaction is N(2)-(1-hydroxy-2-oxopropyl)-dGTP + H2O = lactate + dGTP + H(+). It carries out the reaction N(2)-(1-hydroxy-2-oxopropyl)-GTP + H2O = lactate + GTP + H(+). The enzyme catalyses N(2)-(1-hydroxy-2-oxopropyl)-GDP + H2O = lactate + GDP + H(+). It catalyses the reaction N(2)-(1-hydroxy-2-oxopropyl)-GMP + H2O = lactate + GMP + H(+). The catalysed reaction is N(2)-(1-hydroxy-2-oxoethyl)-dGTP + H2O = dGTP + glycolate + H(+). It carries out the reaction N(2)-(1-hydroxy-2-oxoethyl)-GTP + H2O = glycolate + GTP + H(+). The enzyme catalyses N(2)-(1-hydroxy-2-oxoethyl)-GDP + H2O = glycolate + GDP + H(+). It catalyses the reaction N(2)-(1-hydroxy-2-oxoethyl)-GMP + H2O = glycolate + GMP + H(+). The catalysed reaction is an N(2)-(1-hydroxy-2-oxopropyl)-guanosine in RNA + H2O = a guanosine in RNA + lactate + H(+). It carries out the reaction an N(2)-(1-hydroxy-2-oxopropyl)-2'-deoxyguanosine in DNA + H2O = a 2'-deoxyguanosine in DNA + lactate + H(+). The enzyme catalyses an N(2)-(1-hydroxy-2-oxoethyl)-guanosine in RNA + H2O = a guanosine in RNA + glycolate + H(+). It catalyses the reaction an N(2)-(1-hydroxy-2-oxoethyl)-2'-deoxyguanosine in DNA + H2O = a 2'-deoxyguanosine in DNA + glycolate + H(+). Functionally, protein and nucleotide deglycase that catalyzes the deglycation of the Maillard adducts formed between amino groups of proteins or nucleotides and reactive carbonyl groups of glyoxals. Thus, functions as a protein deglycase that repairs methylglyoxal- and glyoxal-glycated proteins, and releases repaired proteins and lactate or glycolate, respectively. Deglycates cysteine, arginine and lysine residues in proteins, and thus reactivates these proteins by reversing glycation by glyoxals. Acts on early glycation intermediates (hemithioacetals and aminocarbinols), preventing the formation of Schiff bases and advanced glycation endproducts (AGE). Also functions as a nucleotide deglycase able to repair glycated guanine in the free nucleotide pool (GTP, GDP, GMP, dGTP) and in DNA and RNA. Is thus involved in a major nucleotide repair system named guanine glycation repair (GG repair), dedicated to reversing methylglyoxal and glyoxal damage via nucleotide sanitization and direct nucleic acid repair. Plays an important role in protecting cells from carbonyl stress. The chain is Protein/nucleic acid deglycase HchA from Escherichia coli O7:K1 (strain IAI39 / ExPEC).